The primary structure comprises 134 residues: Small ribosomal subunit protein bS16 (134 aa).

Residues 115–134 are disordered; sequence AKLRRRQAKKAAEAAGSAEG.

Belongs to the bacterial ribosomal protein bS16 family.

This Chlorobaculum tepidum (strain ATCC 49652 / DSM 12025 / NBRC 103806 / TLS) (Chlorobium tepidum) protein is Small ribosomal subunit protein bS16.